Reading from the N-terminus, the 209-residue chain is Thymidine kinase (209 aa).

ATP-binding positions include 9-16 (SAMNAGKT) and 88-91 (DEAQ). Glu-89 acts as the Proton acceptor in catalysis.

This sequence belongs to the thymidine kinase family. As to quaternary structure, homotetramer.

The protein localises to the cytoplasm. The enzyme catalyses thymidine + ATP = dTMP + ADP + H(+). In Xanthomonas oryzae pv. oryzae (strain MAFF 311018), this protein is Thymidine kinase.